Here is a 312-residue protein sequence, read N- to C-terminus: Fe-S cluster assembly protein DRE2 (312 aa).

The interval 7-139 is N-terminal SAM-like domain; the sequence is LSDVPRVLLL…VKPVFEEQSV (133 aa). The tract at residues 140-204 is linker; the sequence is LLPFSINRSQ…EDELINEDEL (65 aa). [2Fe-2S] cluster-binding residues include Cys214, Cys225, Cys228, and Cys230. Positions 214–230 are fe-S binding site A; it reads CRPKAGKRRRACKDCTC. Cys275, Cys278, Cys286, and Cys289 together coordinate [4Fe-4S] cluster. 2 consecutive short sequence motifs (cx2C motif) follow at residues 275-278 and 286-289; these read CGNC and CDGC. The tract at residues 275–289 is fe-S binding site B; the sequence is CGNCSLGDAFRCDGC.

It belongs to the anamorsin family. As to quaternary structure, monomer. Interacts with TAH18. Interacts with MIA40. Requires [2Fe-2S] cluster as cofactor. The cofactor is [4Fe-4S] cluster.

The protein localises to the cytoplasm. Its subcellular location is the mitochondrion intermembrane space. Its function is as follows. Component of the cytosolic iron-sulfur (Fe-S) protein assembly (CIA) machinery required for the maturation of extramitochondrial Fe-S proteins. Part of an electron transfer chain functioning in an early step of cytosolic Fe-S biogenesis, facilitating the de novo assembly of a [4Fe-4S] cluster on the scaffold complex CFD1-NBP35. Electrons are transferred to DRE2 from NADPH via the FAD- and FMN-containing protein TAH18. TAH18-DRE2 are also required for the assembly of the diferric tyrosyl radical cofactor of ribonucleotide reductase (RNR), probably by providing electrons for reduction during radical cofactor maturation in the catalytic small subunit RNR2. In Arthroderma otae (strain ATCC MYA-4605 / CBS 113480) (Microsporum canis), this protein is Fe-S cluster assembly protein DRE2.